We begin with the raw amino-acid sequence, 379 residues long: Glutamate 5-kinase (379 aa).

Residue lysine 8 participates in ATP binding. Serine 49, aspartate 136, and asparagine 148 together coordinate substrate. ATP-binding positions include 168 to 169 (TD) and 211 to 217 (TGGMATK). Positions 276-354 (MGKIYLDAGA…ERIASLLGYM (79 aa)) constitute a PUA domain.

It belongs to the glutamate 5-kinase family.

The protein localises to the cytoplasm. The catalysed reaction is L-glutamate + ATP = L-glutamyl 5-phosphate + ADP. It functions in the pathway amino-acid biosynthesis; L-proline biosynthesis; L-glutamate 5-semialdehyde from L-glutamate: step 1/2. Its function is as follows. Catalyzes the transfer of a phosphate group to glutamate to form L-glutamate 5-phosphate. This is Glutamate 5-kinase from Microcystis aeruginosa (strain NIES-843 / IAM M-2473).